The following is an 88-amino-acid chain: Large ribosomal subunit protein eL37 (88 aa).

Zn(2+) is bound by residues C19, C22, C34, and C37. The C4-type zinc finger occupies C19 to C37.

Belongs to the eukaryotic ribosomal protein eL37 family. Zn(2+) serves as cofactor.

Its function is as follows. Binds to the 23S rRNA. The polypeptide is Large ribosomal subunit protein eL37 (RPL37) (Debaryomyces hansenii (strain ATCC 36239 / CBS 767 / BCRC 21394 / JCM 1990 / NBRC 0083 / IGC 2968) (Yeast)).